A 341-amino-acid chain; its full sequence is Farnesyl pyrophosphate synthase 2 (341 aa).

Residues lysine 46, arginine 49, and glutamine 85 each coordinate isopentenyl diphosphate. Mg(2+) contacts are provided by aspartate 92 and aspartate 96. Position 101 (arginine 101) interacts with dimethylallyl diphosphate. Arginine 102 lines the isopentenyl diphosphate pocket. Dimethylallyl diphosphate is bound by residues lysine 189, threonine 190, glutamine 228, lysine 245, and lysine 254.

This sequence belongs to the FPP/GGPP synthase family. It depends on Mg(2+) as a cofactor. As to expression, mainly expressed in trichomes, roots and flowers, and, to a lower extent, in leaves and stems.

It localises to the cytoplasm. The protein resides in the nucleus. It carries out the reaction isopentenyl diphosphate + dimethylallyl diphosphate = (2E)-geranyl diphosphate + diphosphate. The enzyme catalyses isopentenyl diphosphate + (2E)-geranyl diphosphate = (2E,6E)-farnesyl diphosphate + diphosphate. Its pathway is isoprenoid biosynthesis; farnesyl diphosphate biosynthesis; farnesyl diphosphate from geranyl diphosphate and isopentenyl diphosphate: step 1/1. The protein operates within sesquiterpene biosynthesis. It participates in isoprenoid biosynthesis; geranyl diphosphate biosynthesis; geranyl diphosphate from dimethylallyl diphosphate and isopentenyl diphosphate: step 1/1. Functionally, catalyzes the sequential condensation of isopentenyl pyrophosphate with the allylic pyrophosphates, dimethylallyl pyrophosphate, and then with the resultant geranylpyrophosphate to the ultimate product farnesyl pyrophosphate. The polypeptide is Farnesyl pyrophosphate synthase 2 (Cannabis sativa (Hemp)).